Reading from the N-terminus, the 123-residue chain is Small ribosomal subunit protein uS13c (123 aa).

The disordered stretch occupies residues 90–123 (GKRHRNSLPVRGQRTRTNARSRRGAKKTVTGKKK). The segment covering 102–123 (QRTRTNARSRRGAKKTVTGKKK) has biased composition (basic residues).

This sequence belongs to the universal ribosomal protein uS13 family. As to quaternary structure, part of the 30S ribosomal subunit.

It is found in the plastid. The protein localises to the chloroplast. Its function is as follows. Located at the top of the head of the 30S subunit, it contacts several helices of the 16S rRNA. The protein is Small ribosomal subunit protein uS13c of Thalassiosira pseudonana (Marine diatom).